The following is a 424-amino-acid chain: Serpin-Z2A (424 aa).

The tract at residues Gly-370 to Ala-394 is RCL.

The protein belongs to the serpin family.

Its function is as follows. Probable serine protease inhibitor. In Oryza sativa subsp. japonica (Rice), this protein is Serpin-Z2A.